The chain runs to 514 residues: GTPase-activating protein gyp1 (514 aa).

Disordered stretches follow at residues 17-65 (LWNG…QPPK) and 130-164 (LPRMARSTTPNSSSRSLFPQNGVDTTTSRQKLHSS). 2 stretches are compositionally biased toward polar residues: residues 18-28 (WNGSSSATSDP) and 135-158 (RSTTPNSSSRSLFPQNGVDTTTSR). The Rab-GAP TBC domain occupies 216 to 443 (GIPSEHRPIV…RMWDTYMAEG (228 aa)).

The protein localises to the golgi apparatus. The protein resides in the golgi stack. It is found in the cytoplasm. It localises to the nucleus. Its function is as follows. Stimulates specifically the GTPase activity of ypt1. Functions on the Golgi as a negative regulator of ypt1. In Schizosaccharomyces pombe (strain 972 / ATCC 24843) (Fission yeast), this protein is GTPase-activating protein gyp1.